The following is a 323-amino-acid chain: Transaldolase (323 aa).

Catalysis depends on Lys-131, which acts as the Schiff-base intermediate with substrate.

The protein belongs to the transaldolase family. Type 1 subfamily. As to quaternary structure, homodimer.

Its subcellular location is the cytoplasm. The catalysed reaction is D-sedoheptulose 7-phosphate + D-glyceraldehyde 3-phosphate = D-erythrose 4-phosphate + beta-D-fructose 6-phosphate. It functions in the pathway carbohydrate degradation; pentose phosphate pathway; D-glyceraldehyde 3-phosphate and beta-D-fructose 6-phosphate from D-ribose 5-phosphate and D-xylulose 5-phosphate (non-oxidative stage): step 2/3. Functionally, transaldolase is important for the balance of metabolites in the pentose-phosphate pathway. This is Transaldolase from Blochmanniella floridana.